The sequence spans 165 residues: NADPH-dependent 7-cyano-7-deazaguanine reductase (165 aa).

Residues 1–24 (MTTRSTDQTEHLRALGQKTPYPAA) form a disordered region. C56 serves as the catalytic Thioimide intermediate. Catalysis depends on D63, which acts as the Proton donor. Substrate contacts are provided by residues 78–80 (VES) and 97–98 (ME).

Belongs to the GTP cyclohydrolase I family. QueF type 1 subfamily.

Its subcellular location is the cytoplasm. It carries out the reaction 7-aminomethyl-7-carbaguanine + 2 NADP(+) = 7-cyano-7-deazaguanine + 2 NADPH + 3 H(+). It participates in tRNA modification; tRNA-queuosine biosynthesis. Its function is as follows. Catalyzes the NADPH-dependent reduction of 7-cyano-7-deazaguanine (preQ0) to 7-aminomethyl-7-deazaguanine (preQ1). The chain is NADPH-dependent 7-cyano-7-deazaguanine reductase from Nitratidesulfovibrio vulgaris (strain ATCC 29579 / DSM 644 / CCUG 34227 / NCIMB 8303 / VKM B-1760 / Hildenborough) (Desulfovibrio vulgaris).